Here is a 1035-residue protein sequence, read N- to C-terminus: Tyrosine-protein kinase-like otk (1035 aa).

Residues 1–23 (MDMDVMMISMCILASTLMAPGWA) form the signal peptide. Ig-like C2-type domains are found at residues 24–109 (STSG…REAS), 110–199 (PPAK…RVMS), 251–365 (PEDL…APLN), 368–464 (PGLL…VSIN), and 469–559 (PKFS…VQLV). The Extracellular segment spans residues 24–582 (STSGFLRVPQ…GGDGFLVTRA (559 aa)). 5 disulfides stabilise this stretch: C47–C96, C138–C188, C276–C354, C399–C448, and C491–C543. 6 N-linked (GlcNAc...) asparagine glycosylation sites follow: N336, N418, N430, N445, N513, and N525. The helical transmembrane segment at 583–603 (VLITMTVALAYIVLVVGLMLW) threads the bilayer. Residues 604 to 1035 (CRYRRQARKA…SKAMQSVAEK (432 aa)) lie on the Cytoplasmic side of the membrane. Disordered regions lie at residues 623–683 (AGGD…KSVY) and 721–775 (AQSD…KEEE). Residues 658 to 676 (KSNGDAQKSDDTACSQQSR) show a composition bias toward polar residues. Position 681 is a phosphoserine (S681). The 337-residue stretch at 693–1029 (LSELLQIGRG…QLGSALSKAM (337 aa)) folds into the Protein kinase; inactive domain. Positions 723–734 (SDKDADTEKQHS) are enriched in basic and acidic residues. Residues 766 to 775 (DDIEEIKEEE) are compositionally biased toward acidic residues.

The protein belongs to the protein kinase superfamily. Tyr protein kinase family. Insulin receptor subfamily. In terms of assembly, interacts with plexA; component of a receptor complex that mediates the repulsive signaling in response to Semaphorin ligands.

The protein localises to the cell membrane. Acts as a calcium-dependent, homophilic cell adhesion molecule that regulates neural recognition during the development of the nervous system. Component of the repulsive Plexin signaling response to regulate motor axon guidance at the embryonic stage. Also component of a receptor complex that is required in the adult visual system to innervate the lamina layer; specific targeting of R1-R6 axons. The chain is Tyrosine-protein kinase-like otk from Drosophila persimilis (Fruit fly).